The following is a 209-amino-acid chain: Glycerol-3-phosphate acyltransferase (209 aa).

The next 5 membrane-spanning stretches (helical) occupy residues 8–28 (NVLF…YILA), 78–98 (VLVL…LIGI), 124–144 (VLLV…LIVA), 149–169 (ISSL…FIVH), and 170–190 (PDMP…IIFY).

It belongs to the PlsY family. As to quaternary structure, probably interacts with PlsX.

Its subcellular location is the cell inner membrane. It carries out the reaction an acyl phosphate + sn-glycerol 3-phosphate = a 1-acyl-sn-glycero-3-phosphate + phosphate. It participates in lipid metabolism; phospholipid metabolism. In terms of biological role, catalyzes the transfer of an acyl group from acyl-phosphate (acyl-PO(4)) to glycerol-3-phosphate (G3P) to form lysophosphatidic acid (LPA). This enzyme utilizes acyl-phosphate as fatty acyl donor, but not acyl-CoA or acyl-ACP. The protein is Glycerol-3-phosphate acyltransferase of Nitratiruptor sp. (strain SB155-2).